The sequence spans 83 residues: Small ribosomal subunit protein bS20 (83 aa).

Belongs to the bacterial ribosomal protein bS20 family.

Functionally, binds directly to 16S ribosomal RNA. This chain is Small ribosomal subunit protein bS20, found in Leuconostoc mesenteroides subsp. mesenteroides (strain ATCC 8293 / DSM 20343 / BCRC 11652 / CCM 1803 / JCM 6124 / NCDO 523 / NBRC 100496 / NCIMB 8023 / NCTC 12954 / NRRL B-1118 / 37Y).